We begin with the raw amino-acid sequence, 650 residues long: Threonine--tRNA ligase (650 aa).

Positions 1-66 (MVQITLPDGS…DQDAKLAIVT (66 aa)) constitute a TGS domain. The segment at 247–538 (DHRKIGRDLD…LIENHAGAMP (292 aa)) is catalytic. Zn(2+)-binding residues include cysteine 338, histidine 389, and histidine 515.

It belongs to the class-II aminoacyl-tRNA synthetase family. As to quaternary structure, homodimer. Requires Zn(2+) as cofactor.

Its subcellular location is the cytoplasm. It carries out the reaction tRNA(Thr) + L-threonine + ATP = L-threonyl-tRNA(Thr) + AMP + diphosphate + H(+). Its function is as follows. Catalyzes the attachment of threonine to tRNA(Thr) in a two-step reaction: L-threonine is first activated by ATP to form Thr-AMP and then transferred to the acceptor end of tRNA(Thr). Also edits incorrectly charged L-seryl-tRNA(Thr). This chain is Threonine--tRNA ligase, found in Bordetella avium (strain 197N).